Consider the following 199-residue polypeptide: Recombination protein RecR (199 aa).

The segment at 56–71 (CQRCNTFTEGDICERC) adopts a C4-type zinc-finger fold. The 96-residue stretch at 79–174 (ELLCVVETPV…GVTRIARGVP (96 aa)) folds into the Toprim domain.

It belongs to the RecR family.

May play a role in DNA repair. It seems to be involved in an RecBC-independent recombinational process of DNA repair. It may act with RecF and RecO. This Dechloromonas aromatica (strain RCB) protein is Recombination protein RecR.